Consider the following 59-residue polypeptide: Large ribosomal subunit protein uL30 (59 aa).

This sequence belongs to the universal ribosomal protein uL30 family. In terms of assembly, part of the 50S ribosomal subunit.

This chain is Large ribosomal subunit protein uL30, found in Photobacterium profundum (strain SS9).